The sequence spans 229 residues: MKLVLIRHGQSEWNKLNLFTGWHDVDLSEEGVVEAMTAGKRIKEAGLEFDVAFTSVLTRAIKTLNYVLEESDQMWVPVNKSWRLNERHYGALQGLNKQETAEKYGADQVQKWRRSYDTLPPLLEENDERQAKNDRRYQLLDTHAIPSGENLKVTLERVIPYWMDTIAPEIKEGRRVVIAAHGNSLRALVKFLEGISDDEIMELEIPTGVPLVYELNDDLKPVNKYYLDK.

Residues Arg7–Asn14, Thr20–Gly21, Arg59, Glu86–Tyr89, Lys97, Arg113–Arg114, and Gly182–Asn183 each bind substrate. Catalysis depends on His8, which acts as the Tele-phosphohistidine intermediate. Glu86 (proton donor/acceptor) is an active-site residue.

This sequence belongs to the phosphoglycerate mutase family. BPG-dependent PGAM subfamily.

It catalyses the reaction (2R)-2-phosphoglycerate = (2R)-3-phosphoglycerate. It functions in the pathway carbohydrate degradation; glycolysis; pyruvate from D-glyceraldehyde 3-phosphate: step 3/5. Functionally, catalyzes the interconversion of 2-phosphoglycerate and 3-phosphoglycerate. The sequence is that of 2,3-bisphosphoglycerate-dependent phosphoglycerate mutase from Listeria welshimeri serovar 6b (strain ATCC 35897 / DSM 20650 / CCUG 15529 / CIP 8149 / NCTC 11857 / SLCC 5334 / V8).